A 208-amino-acid chain; its full sequence is Probable GTP-binding protein EngB (208 aa).

Residues Leu-23 to Thr-205 form the EngB-type G domain. Residues Gly-31 to Ser-38, Gly-57 to Leu-61, Asp-84 to Gly-87, Thr-154 to Asp-157, and Phe-182 to Ala-184 each bind GTP. Positions 38 and 59 each coordinate Mg(2+).

The protein belongs to the TRAFAC class TrmE-Era-EngA-EngB-Septin-like GTPase superfamily. EngB GTPase family. Mg(2+) is required as a cofactor.

Its function is as follows. Necessary for normal cell division and for the maintenance of normal septation. The polypeptide is Probable GTP-binding protein EngB (Helicobacter pylori (strain G27)).